The chain runs to 198 residues: Pyridoxal 5'-phosphate synthase subunit PdxT (198 aa).

50–52 (GES) contacts L-glutamine. The active-site Nucleophile is the Cys82. Residues Arg114 and 143–144 (IR) each bind L-glutamine. Residues His179 and Glu181 each act as charge relay system in the active site.

Belongs to the glutaminase PdxT/SNO family. As to quaternary structure, in the presence of PdxS, forms a dodecamer of heterodimers. Only shows activity in the heterodimer.

It catalyses the reaction aldehydo-D-ribose 5-phosphate + D-glyceraldehyde 3-phosphate + L-glutamine = pyridoxal 5'-phosphate + L-glutamate + phosphate + 3 H2O + H(+). The catalysed reaction is L-glutamine + H2O = L-glutamate + NH4(+). It functions in the pathway cofactor biosynthesis; pyridoxal 5'-phosphate biosynthesis. Its function is as follows. Catalyzes the hydrolysis of glutamine to glutamate and ammonia as part of the biosynthesis of pyridoxal 5'-phosphate. The resulting ammonia molecule is channeled to the active site of PdxS. The protein is Pyridoxal 5'-phosphate synthase subunit PdxT of Metallosphaera sedula (strain ATCC 51363 / DSM 5348 / JCM 9185 / NBRC 15509 / TH2).